The sequence spans 272 residues: Ribosomal RNA small subunit methyltransferase A (272 aa).

S-adenosyl-L-methionine-binding residues include Asn18, Leu20, Gly45, Glu66, Asp91, and Asn113.

The protein belongs to the class I-like SAM-binding methyltransferase superfamily. rRNA adenine N(6)-methyltransferase family. RsmA subfamily.

It is found in the cytoplasm. It catalyses the reaction adenosine(1518)/adenosine(1519) in 16S rRNA + 4 S-adenosyl-L-methionine = N(6)-dimethyladenosine(1518)/N(6)-dimethyladenosine(1519) in 16S rRNA + 4 S-adenosyl-L-homocysteine + 4 H(+). Its function is as follows. Specifically dimethylates two adjacent adenosines (A1518 and A1519) in the loop of a conserved hairpin near the 3'-end of 16S rRNA in the 30S particle. May play a critical role in biogenesis of 30S subunits. The polypeptide is Ribosomal RNA small subunit methyltransferase A (Yersinia enterocolitica serotype O:8 / biotype 1B (strain NCTC 13174 / 8081)).